Here is a 305-residue protein sequence, read N- to C-terminus: UDP-N-acetylenolpyruvoylglucosamine reductase 2 (305 aa).

Positions 33 to 197 (VGGKADVFVA…LEARFELEEG (165 aa)) constitute an FAD-binding PCMH-type domain. Residue Arg176 is part of the active site. The active-site Proton donor is the Ser226. Glu296 is a catalytic residue.

This sequence belongs to the MurB family. It depends on FAD as a cofactor.

Its subcellular location is the cytoplasm. It carries out the reaction UDP-N-acetyl-alpha-D-muramate + NADP(+) = UDP-N-acetyl-3-O-(1-carboxyvinyl)-alpha-D-glucosamine + NADPH + H(+). Its pathway is cell wall biogenesis; peptidoglycan biosynthesis. Its function is as follows. Cell wall formation. This Bacillus thuringiensis subsp. konkukian (strain 97-27) protein is UDP-N-acetylenolpyruvoylglucosamine reductase 2.